A 371-amino-acid polypeptide reads, in one-letter code: Poly(rC)-binding protein 3 (371 aa).

KH domains lie at 45 to 95 (TLTI…TITG), 129 to 182 (PVTL…TISG), and 293 to 357 (ASTH…QYLI).

It localises to the cytoplasm. In terms of biological role, single-stranded nucleic acid binding protein that binds preferentially to oligo dC. The polypeptide is Poly(rC)-binding protein 3 (Homo sapiens (Human)).